A 251-amino-acid chain; its full sequence is Flap endonuclease Xni (251 aa).

Asp104 is a binding site for Mg(2+). Positions 160–249 (VLPRQLPDYW…IDGNLQQLRL (90 aa)) constitute a 5'-3' exonuclease domain. K(+) contacts are provided by Leu171, Ala172, Pro180, Val182, and Ile185. The interval 184–189 (GIGPKS) is interaction with DNA.

It belongs to the Xni family. Requires Mg(2+) as cofactor. It depends on K(+) as a cofactor.

Its function is as follows. Has flap endonuclease activity. During DNA replication, flap endonucleases cleave the 5'-overhanging flap structure that is generated by displacement synthesis when DNA polymerase encounters the 5'-end of a downstream Okazaki fragment. The polypeptide is Flap endonuclease Xni (Salmonella typhimurium (strain LT2 / SGSC1412 / ATCC 700720)).